The chain runs to 372 residues: uncharacterized protein (372 aa).

A helical transmembrane segment spans residues 224–244 (GSTVGVVIGVVIVIFIGFIII). Ser329 carries the post-translational modification Phosphoserine.

It is found in the vacuole membrane. This is an uncharacterized protein from Saccharomyces cerevisiae (strain ATCC 204508 / S288c) (Baker's yeast).